Reading from the N-terminus, the 232-residue chain is Enolase-phosphatase E1 (232 aa).

The protein belongs to the HAD-like hydrolase superfamily. MasA/MtnC family. As to quaternary structure, monomer. It depends on Mg(2+) as a cofactor.

It carries out the reaction 5-methylsulfanyl-2,3-dioxopentyl phosphate + H2O = 1,2-dihydroxy-5-(methylsulfanyl)pent-1-en-3-one + phosphate. It participates in amino-acid biosynthesis; L-methionine biosynthesis via salvage pathway; L-methionine from S-methyl-5-thio-alpha-D-ribose 1-phosphate: step 3/6. It functions in the pathway amino-acid biosynthesis; L-methionine biosynthesis via salvage pathway; L-methionine from S-methyl-5-thio-alpha-D-ribose 1-phosphate: step 4/6. In terms of biological role, bifunctional enzyme that catalyzes the enolization of 2,3-diketo-5-methylthiopentyl-1-phosphate (DK-MTP-1-P) into the intermediate 2-hydroxy-3-keto-5-methylthiopentenyl-1-phosphate (HK-MTPenyl-1-P), which is then dephosphorylated to form the acireductone 1,2-dihydroxy-3-keto-5-methylthiopentene (DHK-MTPene). The polypeptide is Enolase-phosphatase E1 (Nocardia farcinica (strain IFM 10152)).